A 341-amino-acid chain; its full sequence is UDP-glucuronic acid decarboxylase 5 (341 aa).

The disordered stretch occupies residues 1–21 (MASSDKQTSPKPPPSPSPLRN). Position 60–85 (60–85 (DNYFTGSKDNLKKWIGHPRFELIRHD)) interacts with NAD(+). A substrate-binding site is contributed by R169. Y172 functions as the Proton acceptor in the catalytic mechanism. Position 172 to 176 (172 to 176 (YDEGK)) interacts with NAD(+). N201 provides a ligand contact to substrate. R213 serves as a coordination point for NAD(+). Residues 214-218 (VVSNF), 231-238 (QKPGTQTR), and 298-302 (DPRQR) contribute to the substrate site.

It belongs to the NAD(P)-dependent epimerase/dehydratase family. UDP-glucuronic acid decarboxylase subfamily. It depends on NAD(+) as a cofactor.

It localises to the cytoplasm. It carries out the reaction UDP-alpha-D-glucuronate + H(+) = UDP-alpha-D-xylose + CO2. It functions in the pathway nucleotide-sugar biosynthesis; UDP-alpha-D-xylose biosynthesis; UDP-alpha-D-xylose from UDP-alpha-D-glucuronate: step 1/1. In terms of biological role, catalyzes the NAD-dependent decarboxylation of UDP-glucuronic acid to UDP-xylose. Necessary for the biosynthesis of the core tetrasaccharide in glycosaminoglycan biosynthesis. The sequence is that of UDP-glucuronic acid decarboxylase 5 (UXS5) from Arabidopsis thaliana (Mouse-ear cress).